A 227-amino-acid chain; its full sequence is MIIKTYFSGVSTIGVLSLATEDYGLFPLSVEKNTLEKMKEVLNIPVTQLNISNSSLIGSLCVGNSNGLLVPNIVTSKEIALIKDFLKENSLDVNLEKLKAKNTAFGNLILTNNKGCIISEELQNFRKVIEDVLGVESGVGNYASLPTVGSNGVATDKGCLVHPLTDELELEWITDVLKVDYVGRGTANRGVTSVGSCILANTKGAVIGGDTSGPELLKIEEALDLID.

This sequence belongs to the eIF-6 family.

In terms of biological role, binds to the 50S ribosomal subunit and prevents its association with the 30S ribosomal subunit to form the 70S initiation complex. The sequence is that of Translation initiation factor 6 from Methanococcus vannielii (strain ATCC 35089 / DSM 1224 / JCM 13029 / OCM 148 / SB).